The chain runs to 416 residues: Putative gustatory receptor 57a (416 aa).

Topologically, residues 1 to 13 (MAVLYFFREPETV) are cytoplasmic. A helical transmembrane segment spans residues 14 to 34 (FDCAAFICILQFLMGCNGFGI). The Extracellular segment spans residues 35-48 (RRSTFRISWASRIY). Residues 49 to 69 (SMSVAIAAFCCLFGSLSVLLA) form a helical membrane-spanning segment. Over 70–83 (EEDIRERLAKADNL) the chain is Cytoplasmic. The helical transmembrane segment at 84 to 104 (VLSISALELLMSTLVFGVTVI) threads the bilayer. The Extracellular portion of the chain corresponds to 105–143 (SLQVFARRHLGIYQRLAALDARLMSDFGANLNYRKMLRK). Residues 144–164 (NIAVLGIVTTIYLMAINSAAV) form a helical membrane-spanning segment. Residues 165-171 (QVASGHR) are Cytoplasmic-facing. A helical transmembrane segment spans residues 172 to 192 (ALFLLFALCYTIVTGGPHFTG). Topologically, residues 193–295 (YVHMTLAEML…NEEENGSCYR (103 aa)) are extracellular. The N-linked (GlcNAc...) asparagine glycan is linked to N290. Residues 296–316 (MLGYLALVMIPPLYKLLIAPF) form a helical membrane-spanning segment. Topologically, residues 317–374 (YCDRTIYEARRCLRLVEKLDDWFPQKSSLRPLVESLMSWRIQAKIQFTSGLDVVLSRK) are cytoplasmic. Residues 375–395 (VIGLFTSILVNYLLILIQFAM) traverse the membrane as a helical segment. The Extracellular segment spans residues 396–416 (TQKMGEQIEQQKIALQEWIGF).

The protein belongs to the insect chemoreceptor superfamily. Gustatory receptor (GR) family. Gr57a subfamily. In terms of tissue distribution, in larvae, is expressed in neurons of the terminal external chemosensory organ as well as in the dorsal pharyngeal sense organ.

Its subcellular location is the cell membrane. Probable gustatory receptor which mediates acceptance or avoidance behavior, depending on its substrates. The sequence is that of Putative gustatory receptor 57a (Gr57a) from Drosophila melanogaster (Fruit fly).